Reading from the N-terminus, the 185-residue chain is Elongation factor P (185 aa).

This sequence belongs to the elongation factor P family.

The protein localises to the cytoplasm. The protein operates within protein biosynthesis; polypeptide chain elongation. In terms of biological role, involved in peptide bond synthesis. Stimulates efficient translation and peptide-bond synthesis on native or reconstituted 70S ribosomes in vitro. Probably functions indirectly by altering the affinity of the ribosome for aminoacyl-tRNA, thus increasing their reactivity as acceptors for peptidyl transferase. In Petrotoga mobilis (strain DSM 10674 / SJ95), this protein is Elongation factor P.